The sequence spans 161 residues: Urease accessory protein UreE (161 aa).

The disordered stretch occupies residues 133–161 (EPEAGAYQSAPHSHSHAHDHPFVRLPAHS).

Belongs to the UreE family.

It is found in the cytoplasm. In terms of biological role, involved in urease metallocenter assembly. Binds nickel. Probably functions as a nickel donor during metallocenter assembly. The chain is Urease accessory protein UreE from Pseudomonas putida (strain W619).